The primary structure comprises 37 residues: Large ribosomal subunit protein bL36c (37 aa).

This sequence belongs to the bacterial ribosomal protein bL36 family.

Its subcellular location is the plastid. It localises to the chloroplast. This is Large ribosomal subunit protein bL36c from Liriodendron tulipifera (Tuliptree).